Here is a 212-residue protein sequence, read N- to C-terminus: Pyridoxine/pyridoxamine 5'-phosphate oxidase (212 aa).

Residues 8–11 (RTDY) and lysine 66 each bind substrate. FMN contacts are provided by residues 61–66 (RIVLLK), 76–77 (FT), lysine 83, and glutamine 105. Positions 123, 127, and 131 each coordinate substrate. FMN is bound by residues 140 to 141 (QS) and tryptophan 184. Residue 190–192 (RLH) coordinates substrate. FMN is bound at residue arginine 194.

The protein belongs to the pyridoxamine 5'-phosphate oxidase family. Homodimer. The cofactor is FMN.

The enzyme catalyses pyridoxamine 5'-phosphate + O2 + H2O = pyridoxal 5'-phosphate + H2O2 + NH4(+). It catalyses the reaction pyridoxine 5'-phosphate + O2 = pyridoxal 5'-phosphate + H2O2. It functions in the pathway cofactor metabolism; pyridoxal 5'-phosphate salvage; pyridoxal 5'-phosphate from pyridoxamine 5'-phosphate: step 1/1. It participates in cofactor metabolism; pyridoxal 5'-phosphate salvage; pyridoxal 5'-phosphate from pyridoxine 5'-phosphate: step 1/1. Catalyzes the oxidation of either pyridoxine 5'-phosphate (PNP) or pyridoxamine 5'-phosphate (PMP) into pyridoxal 5'-phosphate (PLP). The chain is Pyridoxine/pyridoxamine 5'-phosphate oxidase from Ralstonia pickettii (strain 12J).